The chain runs to 160 residues: SsrA-binding protein (160 aa).

This sequence belongs to the SmpB family.

The protein localises to the cytoplasm. Functionally, required for rescue of stalled ribosomes mediated by trans-translation. Binds to transfer-messenger RNA (tmRNA), required for stable association of tmRNA with ribosomes. tmRNA and SmpB together mimic tRNA shape, replacing the anticodon stem-loop with SmpB. tmRNA is encoded by the ssrA gene; the 2 termini fold to resemble tRNA(Ala) and it encodes a 'tag peptide', a short internal open reading frame. During trans-translation Ala-aminoacylated tmRNA acts like a tRNA, entering the A-site of stalled ribosomes, displacing the stalled mRNA. The ribosome then switches to translate the ORF on the tmRNA; the nascent peptide is terminated with the 'tag peptide' encoded by the tmRNA and targeted for degradation. The ribosome is freed to recommence translation, which seems to be the essential function of trans-translation. The protein is SsrA-binding protein of Klebsiella pneumoniae (strain 342).